The chain runs to 159 residues: Ascorbate-specific PTS system EIIA component (159 aa).

One can recognise a PTS EIIA type-2 domain in the interval 9–152 (VLKQHHTVRL…TSLFAVIDRV (144 aa)). His-71 acts as the Tele-phosphohistidine intermediate in catalysis. His-71 carries the phosphohistidine modification.

The protein resides in the cytoplasm. The phosphoenolpyruvate-dependent sugar phosphotransferase system (sugar PTS), a major carbohydrate active transport system, catalyzes the phosphorylation of incoming sugar substrates concomitantly with their translocation across the cell membrane. The enzyme II UlaABC PTS system is involved in ascorbate transport. This chain is Ascorbate-specific PTS system EIIA component (ulaC), found in Mycoplasma pneumoniae (strain ATCC 29342 / M129 / Subtype 1) (Mycoplasmoides pneumoniae).